Consider the following 528-residue polypeptide: Glucose-6-phosphate isomerase (528 aa).

Glu322 (proton donor) is an active-site residue. Residues His351 and Lys455 contribute to the active site.

The protein belongs to the GPI family.

The protein resides in the cytoplasm. It carries out the reaction alpha-D-glucose 6-phosphate = beta-D-fructose 6-phosphate. Its pathway is carbohydrate biosynthesis; gluconeogenesis. It functions in the pathway carbohydrate degradation; glycolysis; D-glyceraldehyde 3-phosphate and glycerone phosphate from D-glucose: step 2/4. In terms of biological role, catalyzes the reversible isomerization of glucose-6-phosphate to fructose-6-phosphate. This is Glucose-6-phosphate isomerase from Nostoc punctiforme (strain ATCC 29133 / PCC 73102).